A 464-amino-acid polypeptide reads, in one-letter code: tRNA(Ile)-lysidine synthase (464 aa).

30 to 35 (SGGVDS) provides a ligand contact to ATP.

It belongs to the tRNA(Ile)-lysidine synthase family.

The protein resides in the cytoplasm. The catalysed reaction is cytidine(34) in tRNA(Ile2) + L-lysine + ATP = lysidine(34) in tRNA(Ile2) + AMP + diphosphate + H(+). Its function is as follows. Ligates lysine onto the cytidine present at position 34 of the AUA codon-specific tRNA(Ile) that contains the anticodon CAU, in an ATP-dependent manner. Cytidine is converted to lysidine, thus changing the amino acid specificity of the tRNA from methionine to isoleucine. This chain is tRNA(Ile)-lysidine synthase, found in Shewanella oneidensis (strain ATCC 700550 / JCM 31522 / CIP 106686 / LMG 19005 / NCIMB 14063 / MR-1).